A 452-amino-acid polypeptide reads, in one-letter code: MLKYFGTDGVRGVANQGLTPEMAFKLGRDGGYVLTKNKKDGEQAKVLVSRDTRISGQMLEYALISGLLSVGIEVLEVGVITTPGLSYLVRAQGADAGIQISASHNPVEDNGIKFFGSDGLKLSDEMEGEIEKLIDAEEDTLPRPSAEGLGTVTDFHEGSAKYLQFIENTIPEELDGIKVVIDGANGASSALISRLFADCGVDFTTIYTHPNGLNINDHCGATHTENLQKEVVKQGAQLGLAFDGDADRCIAVDENGNEVDGDHIMYVIGSYLAEHGRLKKDTIVTTVMSNLGFTKALEKEDLKNVRTQVGDRYVSEEMRAHGYNLGGEQSGHVIMSDYHNTGDGMLTGLHLMLVMKKTGKSLSELLKDFKDYPQCLVNVPVTDKKSWKEHQPILDVIAEVEKDMAGNGRVLVRPSGTQDLLRVMAEGPTQEETDAYVDRIVKVVEKEMGTNK.

Residue Ser-103 is the Phosphoserine intermediate of the active site. Mg(2+) contacts are provided by Ser-103, Asp-243, Asp-245, and Asp-247. A Phosphoserine modification is found at Ser-103.

This sequence belongs to the phosphohexose mutase family. The cofactor is Mg(2+). Activated by phosphorylation.

The enzyme catalyses alpha-D-glucosamine 1-phosphate = D-glucosamine 6-phosphate. Functionally, catalyzes the conversion of glucosamine-6-phosphate to glucosamine-1-phosphate. The sequence is that of Phosphoglucosamine mutase from Lactobacillus acidophilus (strain ATCC 700396 / NCK56 / N2 / NCFM).